Reading from the N-terminus, the 342-residue chain is 4-hydroxy-2-oxovalerate aldolase (342 aa).

Residues 7 to 257 (IWITEVALRD…KTGVDLYKMM (251 aa)) form the Pyruvate carboxyltransferase domain. Position 15 to 16 (15 to 16 (RD)) interacts with substrate. Asp16 is a Mn(2+) binding site. The Proton acceptor role is filled by His19. 2 residues coordinate substrate: Ser169 and His196. Residues His196 and His198 each coordinate Mn(2+). Tyr287 contributes to the substrate binding site.

Belongs to the 4-hydroxy-2-oxovalerate aldolase family.

The enzyme catalyses (S)-4-hydroxy-2-oxopentanoate = acetaldehyde + pyruvate. The protein is 4-hydroxy-2-oxovalerate aldolase (nbaI) of Geobacillus thermodenitrificans (strain NG80-2).